The primary structure comprises 266 residues: Glucosamine-6-phosphate deaminase (266 aa).

Asp72 acts as the Proton acceptor; for enolization step in catalysis. Asp141 functions as the For ring-opening step in the catalytic mechanism. His143 acts as the Proton acceptor; for ring-opening step in catalysis. Glu148 acts as the For ring-opening step in catalysis.

It belongs to the glucosamine/galactosamine-6-phosphate isomerase family. NagB subfamily. As to quaternary structure, homohexamer.

The enzyme catalyses alpha-D-glucosamine 6-phosphate + H2O = beta-D-fructose 6-phosphate + NH4(+). The protein operates within amino-sugar metabolism; N-acetylneuraminate degradation; D-fructose 6-phosphate from N-acetylneuraminate: step 5/5. Allosterically activated by N-acetylglucosamine 6-phosphate (GlcNAc6P). In terms of biological role, catalyzes the reversible isomerization-deamination of glucosamine 6-phosphate (GlcN6P) to form fructose 6-phosphate (Fru6P) and ammonium ion. The chain is Glucosamine-6-phosphate deaminase from Vibrio cholerae serotype O1 (strain ATCC 39541 / Classical Ogawa 395 / O395).